The sequence spans 131 residues: Small ribosomal subunit protein uS12 (131 aa).

Aspartate 89 bears the 3-methylthioaspartic acid mark.

The protein belongs to the universal ribosomal protein uS12 family. As to quaternary structure, part of the 30S ribosomal subunit. Contacts proteins S8 and S17. May interact with IF1 in the 30S initiation complex.

Functionally, with S4 and S5 plays an important role in translational accuracy. In terms of biological role, interacts with and stabilizes bases of the 16S rRNA that are involved in tRNA selection in the A site and with the mRNA backbone. Located at the interface of the 30S and 50S subunits, it traverses the body of the 30S subunit contacting proteins on the other side and probably holding the rRNA structure together. The combined cluster of proteins S8, S12 and S17 appears to hold together the shoulder and platform of the 30S subunit. In Karelsulcia muelleri (strain GWSS) (Sulcia muelleri), this protein is Small ribosomal subunit protein uS12.